The sequence spans 197 residues: V-type ATP synthase subunit E 2 (197 aa).

This sequence belongs to the V-ATPase E subunit family.

In terms of biological role, produces ATP from ADP in the presence of a proton gradient across the membrane. This is V-type ATP synthase subunit E 2 from Clostridium tetani (strain Massachusetts / E88).